Consider the following 354-residue polypeptide: Cytoplasmic tRNA 2-thiolation protein 1 (354 aa).

Belongs to the TtcA family. CTU1/NCS6/ATPBD3 subfamily.

It localises to the cytoplasm. The protein operates within tRNA modification; 5-methoxycarbonylmethyl-2-thiouridine-tRNA biosynthesis. Functionally, plays a central role in 2-thiolation of mcm(5)S(2)U at tRNA wobble positions of tRNA(Lys), tRNA(Glu) and tRNA(Gln). Directly binds tRNAs and probably acts by catalyzing adenylation of tRNAs, an intermediate required for 2-thiolation. It is unclear whether it acts as a sulfurtransferase that transfers sulfur from thiocarboxylated URM1 onto the uridine of tRNAs at wobble position. Prior mcm(5) tRNA modification by the elongator complex is required for 2-thiolation. May also be involved in protein urmylation. This is Cytoplasmic tRNA 2-thiolation protein 1 from Laccaria bicolor (strain S238N-H82 / ATCC MYA-4686) (Bicoloured deceiver).